The primary structure comprises 407 residues: Nicotinate phosphoribosyltransferase (407 aa).

Phosphohistidine; by autocatalysis is present on His224.

This sequence belongs to the NAPRTase family. Transiently phosphorylated on a His residue during the reaction cycle. Phosphorylation strongly increases the affinity for substrates and increases the rate of nicotinate D-ribonucleotide production. Dephosphorylation regenerates the low-affinity form of the enzyme, leading to product release.

It carries out the reaction nicotinate + 5-phospho-alpha-D-ribose 1-diphosphate + ATP + H2O = nicotinate beta-D-ribonucleotide + ADP + phosphate + diphosphate. It participates in cofactor biosynthesis; NAD(+) biosynthesis; nicotinate D-ribonucleotide from nicotinate: step 1/1. Its function is as follows. Catalyzes the synthesis of beta-nicotinate D-ribonucleotide from nicotinate and 5-phospho-D-ribose 1-phosphate at the expense of ATP. This chain is Nicotinate phosphoribosyltransferase, found in Pseudomonas savastanoi pv. phaseolicola (strain 1448A / Race 6) (Pseudomonas syringae pv. phaseolicola (strain 1448A / Race 6)).